A 140-amino-acid polypeptide reads, in one-letter code: Translation initiation factor 2 subunit beta (140 aa).

This sequence belongs to the eIF-2-beta/eIF-5 family. Heterotrimer composed of an alpha, a beta and a gamma chain.

EIF-2 functions in the early steps of protein synthesis by forming a ternary complex with GTP and initiator tRNA. This is Translation initiation factor 2 subunit beta from Metallosphaera sedula (strain ATCC 51363 / DSM 5348 / JCM 9185 / NBRC 15509 / TH2).